The following is a 560-amino-acid chain: E3 SUMO-protein ligase CBX4 (560 aa).

Residues 1-75 (MELPAVGEHV…LMGYRKRGPK (75 aa)) form an involved in interaction with H3C15 and H3C1 region. Residues 1-539 (MELPAVGEHV…LSEFKPFFGN (539 aa)) are interaction with BMI1. Positions 11–69 (FAVESIEKKRIRKGRVEYLVKWRGWSPKYNTWEPEENILDPRLLIAFQNRERQEQLMGY) constitute a Chromo domain. Residues Lys77, Lys106, Lys114, and Lys125 each participate in a glycyl lysine isopeptide (Lys-Gly) (interchain with G-Cter in SUMO2) cross-link. Positions 92-152 (VLTGLQDSST…PPGKSGKYYY (61 aa)) are disordered. An N6-acetyllysine; alternate modification is found at Lys149. Lys149 is covalently cross-linked (Glycyl lysine isopeptide (Lys-Gly) (interchain with G-Cter in SUMO2); alternate). Glycyl lysine isopeptide (Lys-Gly) (interchain with G-Cter in SUMO2) cross-links involve residues Lys157, Lys167, and Lys178. Residue Ser182 is modified to Phosphoserine. Glycyl lysine isopeptide (Lys-Gly) (interchain with G-Cter in SUMO2) cross-links involve residues Lys191, Lys205, Lys212, Lys223, Lys249, Lys268, Lys278, and Lys280. The tract at residues 217 to 243 (AAGAPGKGSEKGPPNGMMPAPKEAVTG) is disordered. 2 stretches are compositionally biased toward basic and acidic residues: residues 281–291 (SGEVAEGEARS) and 298–331 (AADE…REEE). Residues 281-404 (SGEVAEGEAR…HHHHHHAVGL (124 aa)) form a disordered region. Glycyl lysine isopeptide (Lys-Gly) (interchain with G-Cter in SUMO2) cross-links involve residues Lys320, Lys352, and Lys365. Residues 380–401 (PSHHPHPHPHHHHHHHHHHHHA) show a composition bias toward basic residues. Position 467 is a phosphoserine (Ser467). Lys494 is covalently cross-linked (Glycyl lysine isopeptide (Lys-Gly) (interchain with G-Cter in SUMO2); alternate). Residue Lys494 forms a Glycyl lysine isopeptide (Lys-Gly) (interchain with G-Cter in SUMO); alternate linkage. Phosphothreonine; by HIPK2 is present on Thr497. The span at 509-521 (AAPTTTAEKPPAE) shows a compositional bias: low complexity. Residues 509–528 (AAPTTTAEKPPAEAQDEPAE) are disordered. An involved in interaction with H3C15 and RNF2 region spans residues 531–556 (SEFKPFFGNIIITDVTANCLTVTFKE). Residues 540-560 (IIITDVTANCLTVTFKEYVTV) are interaction with RNF2.

Interacts with histone H3-K9Me3. Interacts with CHTOP. Component of a PRC1-like complex. The composition of the PRC1 complex differs between the PRC1 complex in pluripotent embryonic stem cells containing RNF2, CBX7 and PCGF2, and the PRC1 complex in differentiating cells containing RNF2, CBX2, CBX4 and BMI1. Self-associates. Interacts with SUV39H1 and HIPK2. Interacts with CSNK2B. May interact with H3C15, H3C1 and RNF2. Interacts with SUMO1P1/SUMO5. Interacts with PRDM1/Blimp-1. Post-translationally, ubiquitinated. Ubiquitination regulates the function of the Polycomb group (PcG) multiprotein PRC1-like complex. Deubiquitinated by USP26. In terms of processing, phosphorylated on Thr-497 by HIPK2 upon DNA damage. This phosphorylation stimulates E3 SUMO-protein ligase activity and promotes sumoylation on Lys-494, as well as sumoylation of other target proteins, such as HNRNPK. Ubiquitous.

The protein resides in the nucleus. It localises to the nucleus speckle. It functions in the pathway protein modification; protein sumoylation. Its function is as follows. E3 SUMO-protein ligase that catalyzes sumoylation of target proteins by promoting the transfer of SUMO from the E2 enzyme to the substrate. Involved in the sumoylation of HNRNPK, a p53/TP53 transcriptional coactivator, hence indirectly regulates p53/TP53 transcriptional activation resulting in p21/CDKN1A expression. Monosumoylates ZNF131. In terms of biological role, component of a Polycomb group (PcG) multiprotein PRC1-like complex, a complex class required to maintain the transcriptionally repressive state of many genes, including Hox genes, throughout development. PcG PRC1 complex acts via chromatin remodeling and modification of histones; it mediates monoubiquitination of histone H2A 'Lys-119', rendering chromatin heritably changed in its expressibility. Binds to histone H3 trimethylated at 'Lys-9' (H3K9me3). Plays a role in the lineage differentiation of the germ layers in embryonic development. This chain is E3 SUMO-protein ligase CBX4 (CBX4), found in Homo sapiens (Human).